Reading from the N-terminus, the 418-residue chain is Nucleoside permease NupC (418 aa).

9 helical membrane-spanning segments follow: residues 2–22, 34–54, 93–113, 174–194, 198–218, 264–284, 292–314, 354–374, and 395–415; these read IFSSLFSVVGMAVLFLIAWVF, IVSAFVIQVALGALALYVPLG, IGGFVFAINVLAIIIFFASLI, IFAVMCVGMASVAGPVLAGYA, IPLPYLIAASFMSAPGGLLFA, LLAFVGMLALINGLLGVVGGF, LGLILGTLLKPLAFMLGIPWSQA, AIITFALCGFANLSSVAMLIG, and VLVGTLSNFMSATIAGLFIGL.

This sequence belongs to the concentrative nucleoside transporter (CNT) (TC 2.A.41) family.

Its subcellular location is the cell inner membrane. In terms of biological role, involved in purine nucleosides uptake. Could also be involved in uptake of nucleobases. The chain is Nucleoside permease NupC from Helicobacter pylori (strain ATCC 700392 / 26695) (Campylobacter pylori).